A 163-amino-acid polypeptide reads, in one-letter code: NADH-quinone oxidoreductase subunit I (163 aa).

4Fe-4S ferredoxin-type domains lie at 53–83 (LRRY…IEAG) and 94–123 (VRYD…EGPN). The [4Fe-4S] cluster site is built by Cys-63, Cys-66, Cys-69, Cys-73, Cys-103, Cys-106, Cys-109, and Cys-113.

It belongs to the complex I 23 kDa subunit family. As to quaternary structure, NDH-1 is composed of 14 different subunits. Subunits NuoA, H, J, K, L, M, N constitute the membrane sector of the complex. [4Fe-4S] cluster serves as cofactor.

It localises to the cell inner membrane. The enzyme catalyses a quinone + NADH + 5 H(+)(in) = a quinol + NAD(+) + 4 H(+)(out). Functionally, NDH-1 shuttles electrons from NADH, via FMN and iron-sulfur (Fe-S) centers, to quinones in the respiratory chain. The immediate electron acceptor for the enzyme in this species is believed to be ubiquinone. Couples the redox reaction to proton translocation (for every two electrons transferred, four hydrogen ions are translocated across the cytoplasmic membrane), and thus conserves the redox energy in a proton gradient. The chain is NADH-quinone oxidoreductase subunit I from Brucella abortus (strain S19).